The sequence spans 418 residues: Tyrosine--tRNA ligase (418 aa).

Tyr34 is a binding site for L-tyrosine. A 'HIGH' region motif is present at residues 39 to 48 (PTADSLHLGH). Residues Tyr169 and Gln173 each coordinate L-tyrosine. The short motif at 229–233 (KFGKS) is the 'KMSKS' region element. Residue Lys232 participates in ATP binding. The S4 RNA-binding domain maps to 352 to 418 (LNIVDMLVTA…GKKKYAVLTY (67 aa)).

This sequence belongs to the class-I aminoacyl-tRNA synthetase family. TyrS type 1 subfamily. In terms of assembly, homodimer.

The protein localises to the cytoplasm. The catalysed reaction is tRNA(Tyr) + L-tyrosine + ATP = L-tyrosyl-tRNA(Tyr) + AMP + diphosphate + H(+). Its function is as follows. Catalyzes the attachment of tyrosine to tRNA(Tyr) in a two-step reaction: tyrosine is first activated by ATP to form Tyr-AMP and then transferred to the acceptor end of tRNA(Tyr). The chain is Tyrosine--tRNA ligase from Streptococcus equi subsp. zooepidemicus (strain H70).